We begin with the raw amino-acid sequence, 432 residues long: Trigger factor (432 aa).

One can recognise a PPIase FKBP-type domain in the interval 161 to 246 (EDRVTIDFTG…LKKVEERELP (86 aa)).

Belongs to the FKBP-type PPIase family. Tig subfamily.

It is found in the cytoplasm. It catalyses the reaction [protein]-peptidylproline (omega=180) = [protein]-peptidylproline (omega=0). Involved in protein export. Acts as a chaperone by maintaining the newly synthesized protein in an open conformation. Functions as a peptidyl-prolyl cis-trans isomerase. This Klebsiella pneumoniae subsp. pneumoniae (strain ATCC 700721 / MGH 78578) protein is Trigger factor.